The following is a 418-amino-acid chain: Tyrosine--tRNA ligase 1 (418 aa).

Residue Tyr-34 coordinates L-tyrosine. Residues 39 to 48 (PTADSLHIGH) carry the 'HIGH' region motif. Tyr-169 and Gln-173 together coordinate L-tyrosine. A 'KMSKS' region motif is present at residues 230–234 (KFGKT). Lys-233 contributes to the ATP binding site. Residues 352–418 (TVLIDLLVES…GKKKYFLIRY (67 aa)) enclose the S4 RNA-binding domain.

It belongs to the class-I aminoacyl-tRNA synthetase family. TyrS type 1 subfamily. Homodimer.

The protein resides in the cytoplasm. The enzyme catalyses tRNA(Tyr) + L-tyrosine + ATP = L-tyrosyl-tRNA(Tyr) + AMP + diphosphate + H(+). Its function is as follows. Catalyzes the attachment of tyrosine to tRNA(Tyr) in a two-step reaction: tyrosine is first activated by ATP to form Tyr-AMP and then transferred to the acceptor end of tRNA(Tyr). The protein is Tyrosine--tRNA ligase 1 of Bacillus cereus (strain ATCC 10987 / NRS 248).